The primary structure comprises 356 residues: D-xylulose reductase (356 aa).

Zn(2+) is bound by residues C44, H69, and E155. 179–184 lines the NAD(+) pocket; sequence GAGPIG.

The protein belongs to the zinc-containing alcohol dehydrogenase family. It depends on Zn(2+) as a cofactor.

It catalyses the reaction xylitol + NAD(+) = D-xylulose + NADH + H(+). It functions in the pathway carbohydrate degradation; L-arabinose degradation via L-arabinitol; D-xylulose 5-phosphate from L-arabinose (fungal route): step 4/5. This is D-xylulose reductase (XYL2) from Saccharomyces cerevisiae (strain ATCC 204508 / S288c) (Baker's yeast).